The sequence spans 379 residues: Protein RecA (379 aa).

Position 79 to 86 (79 to 86) interacts with ATP; sequence GPESSGKT.

It belongs to the RecA family.

It localises to the cytoplasm. Functionally, can catalyze the hydrolysis of ATP in the presence of single-stranded DNA, the ATP-dependent uptake of single-stranded DNA by duplex DNA, and the ATP-dependent hybridization of homologous single-stranded DNAs. It interacts with LexA causing its activation and leading to its autocatalytic cleavage. The chain is Protein RecA from Streptococcus thermophilus.